Consider the following 258-residue polypeptide: C1q-related factor (258 aa).

The first 16 residues, 1-16, serve as a signal peptide directing secretion; the sequence is MLLVLVVLIPVLVSSG. The disordered stretch occupies residues 39-120; it reads GPGAGARSDG…PGSGGSGAIS (82 aa). Positions 67–77 are enriched in low complexity; that stretch reads GPQGKPGRTGK. One can recognise a Collagen-like domain in the interval 67-115; the sequence is GPQGKPGRTGKPGPPGPPGDRGPPGPVGPPGEKGEPGKPGPPGLPGSGG. Residues 78-95 show a composition bias toward pro residues; the sequence is PGPPGPPGDRGPPGPVGP. Residues 125–258 form the C1q domain; sequence TTVPRVAFYA…TFSGFIIYSD (134 aa).

In terms of assembly, interacts with ADGRB3. Forms heterooligomers with C1QL4, when proteins are coexpressed; this interaction does not occur after secretion. As to expression, expressed in brainstem. More abundant in areas of the nervous system involved in motor function, such as the Purkinje cells of the cerebellum, the accessory olivary nucleus, the pons and the red nucleus.

It localises to the secreted. In terms of biological role, may regulate the number of excitatory synapses that are formed on hippocampus neurons. Has no effect on inhibitory synapses. The protein is C1q-related factor (C1ql1) of Mus musculus (Mouse).